A 164-amino-acid polypeptide reads, in one-letter code: UPF0178 protein RPB_3201 (164 aa).

This sequence belongs to the UPF0178 family.

The sequence is that of UPF0178 protein RPB_3201 from Rhodopseudomonas palustris (strain HaA2).